The sequence spans 71 residues: uncharacterized protein (71 aa).

At 1-16 the chain is on the cytoplasmic side; sequence MLLLYTVMILTCIIYK. The helical transmembrane segment at 17–38 threads the bilayer; the sequence is LVPDNKYWPIHMFFFIMIYIVY. Over 39 to 69 the chain is Extracellular; the sequence is MYEKLDIHEKSQFWNYTMARLSGHPVPTIIC. The N-linked (GlcNAc...) asparagine; by host glycan is linked to asparagine 53.

Belongs to the asfivirus X69R family.

It is found in the host membrane. This is an uncharacterized protein from African swine fever virus (isolate Pig/Kenya/KEN-50/1950) (ASFV).